Consider the following 434-residue polypeptide: Sodium/bile acid cotransporter 5 (434 aa).

The first 18 residues, 1-18 (MSGKLFIILLLLVTPGEA), serve as a signal peptide directing secretion. Over 19-129 (RKSFLRFLNI…VSVFRQTEDS (111 aa)) the chain is Extracellular. Residues asparagine 73 and asparagine 96 are each glycosylated (N-linked (GlcNAc...) asparagine). A helical membrane pass occupies residues 130–150 (LFQEPIHVNSSVFLLVLLMIL). The Cytoplasmic segment spans residues 151 to 172 (LNKCAFGCKIELQVLQTVWKRP). The helical transmembrane segment at 173 to 193 (LPILLGAVTQFFLMPFCGFLL) threads the bilayer. At 194–195 (SQ) the chain is on the extracellular side. Residues 196 to 216 (ILGLSKAQAFGFVMTCTCPGG) form a helical membrane-spanning segment. The Cytoplasmic portion of the chain corresponds to 217–232 (GGGYLFALLLEGDVTL). The chain crosses the membrane as a helical span at residues 233–255 (AILMACTSTSLALIMMPVNSYLY). Over 256–268 (SCLLGLAGVFHVP) the chain is Extracellular. A helical membrane pass occupies residues 269-289 (VLKIVSTLLFILTPVSIGIVI). Topologically, residues 290–306 (KHRMPKKAVCLERVVQP) are cytoplasmic. The helical transmembrane segment at 307-327 (LSLTLMLVGVYLAFRMGLVFL) threads the bilayer. The Extracellular portion of the chain corresponds to 328–331 (RMAN). A helical transmembrane segment spans residues 332–352 (LEVFLLGLLVPVLGFSFGYSF). Residues 353–365 (AKVYLLPLPVCKT) lie on the Cytoplasmic side of the membrane. Residues 366 to 386 (VAIESGMLNSFLALAIIQLSF) form a helical membrane-spanning segment. Topologically, residues 387-395 (PQSKAYEAS) are extracellular. The helical transmembrane segment at 396–416 (VAPFTVAMCSSCEMLLLLLVY) threads the bilayer. Residues 417 to 434 (KAKKRPLLSTENEKAPLV) lie on the Cytoplasmic side of the membrane.

It belongs to the bile acid:sodium symporter (BASS) (TC 2.A.28) family.

It localises to the membrane. The sequence is that of Sodium/bile acid cotransporter 5 (Slc10a5) from Rattus norvegicus (Rat).